A 171-amino-acid chain; its full sequence is MERLKTKIRDIPDFPKPGVLFKDITPLVGDPATLRLAVHQLLHPFLEQDITAVGGIEARGFIFGALVAWELGVGFIPLRKSGKLPYEVRSISYQLEYGSASLEAHTDSLGPGDNVLLVDDLLATGGTAKASCELVESLGATVAACAFVIELDFLHGRERLSDYTVHSLVHY.

It belongs to the purine/pyrimidine phosphoribosyltransferase family. In terms of assembly, homodimer.

It localises to the cytoplasm. The enzyme catalyses AMP + diphosphate = 5-phospho-alpha-D-ribose 1-diphosphate + adenine. It functions in the pathway purine metabolism; AMP biosynthesis via salvage pathway; AMP from adenine: step 1/1. In terms of biological role, catalyzes a salvage reaction resulting in the formation of AMP, that is energically less costly than de novo synthesis. The sequence is that of Adenine phosphoribosyltransferase from Nitrosococcus oceani (strain ATCC 19707 / BCRC 17464 / JCM 30415 / NCIMB 11848 / C-107).